An 807-amino-acid polypeptide reads, in one-letter code: Putative AC transposase (807 aa).

Disordered regions lie at residues 42–140 (GLKR…KKCT) and 785–807 (MDED…GSSP). The segment covering 84-98 (QSVSSSNANGTATDP) has biased composition (polar residues). A run of 10 repeats spans residues 109 to 110 (PQ), 111 to 112 (PQ), 113 to 114 (PQ), 115 to 116 (PQ), 117 to 118 (PE), 119 to 120 (PQ), 121 to 122 (PQ), 123 to 124 (PQ), 125 to 126 (PE), and 127 to 128 (PE). A 10 X 2 AA tandem repeats of P-[QE] region spans residues 109-128 (PQPQPQPQPEPQPQPQPEPE). Residues 110–125 (QPQPQPQPEPQPQPQP) show a composition bias toward pro residues.

This chain is Putative AC transposase, found in Zea mays (Maize).